The primary structure comprises 300 residues: GTPase Era (300 aa).

Residues 8-176 form the Era-type G domain; it reads RCGYVAIVGR…ESLIASHLPE (169 aa). Residues 16–23 form a G1 region; it reads GRPNVGKS. Position 16–23 (16–23) interacts with GTP; the sequence is GRPNVGKS. The G2 stretch occupies residues 42–46; the sequence is QTTRH. The G3 stretch occupies residues 63-66; the sequence is DTPG. Residues 63-67 and 125-128 each bind GTP; these read DTPGM and NKTD. The G4 stretch occupies residues 125–128; that stretch reads NKTD. Residues 155–157 form a G5 region; the sequence is ISA. The region spanning 199–283 is the KH type-2 domain; the sequence is VREKIMRQLG…MLNLWVKVKG (85 aa).

Belongs to the TRAFAC class TrmE-Era-EngA-EngB-Septin-like GTPase superfamily. Era GTPase family. As to quaternary structure, monomer.

Its subcellular location is the cytoplasm. It is found in the cell inner membrane. In terms of biological role, an essential GTPase that binds both GDP and GTP, with rapid nucleotide exchange. Plays a role in 16S rRNA processing and 30S ribosomal subunit biogenesis and possibly also in cell cycle regulation and energy metabolism. This is GTPase Era from Pseudomonas savastanoi pv. phaseolicola (strain 1448A / Race 6) (Pseudomonas syringae pv. phaseolicola (strain 1448A / Race 6)).